Reading from the N-terminus, the 495-residue chain is Phytochrome A type 5 (495 aa).

Residues 1 to 21 (MSSSRPASSSSSRNRQSSQAR) show a composition bias toward low complexity. Residues 1 to 24 (MSSSRPASSSSSRNRQSSQARVLA) are disordered. Residues 217-402 (SMEMLCNTVV…VFAVHVNREF (186 aa)) form the GAF domain. Residue cysteine 322 coordinates phytochromobilin.

This sequence belongs to the phytochrome family. In terms of assembly, homodimer. In terms of processing, contains one covalently linked phytochromobilin chromophore.

Its function is as follows. Regulatory photoreceptor which exists in two forms that are reversibly interconvertible by light: the Pr form that absorbs maximally in the red region of the spectrum and the Pfr form that absorbs maximally in the far-red region. Photoconversion of Pr to Pfr induces an array of morphogenic responses, whereas reconversion of Pfr to Pr cancels the induction of those responses. Pfr controls the expression of a number of nuclear genes including those encoding the small subunit of ribulose-bisphosphate carboxylase, chlorophyll A/B binding protein, protochlorophyllide reductase, rRNA, etc. It also controls the expression of its own gene(s) in a negative feedback fashion. In Avena sativa (Oat), this protein is Phytochrome A type 5 (PHYA5).